Reading from the N-terminus, the 434-residue chain is uncharacterized protein (434 aa).

Positions leucine 4–lysine 62 constitute a TRAM domain. 4 residues coordinate [4Fe-4S] cluster: cysteine 75, cysteine 81, cysteine 84, and cysteine 161. Positions 266, 295, 316, and 364 each coordinate S-adenosyl-L-methionine. Cysteine 391 (nucleophile) is an active-site residue.

Belongs to the class I-like SAM-binding methyltransferase superfamily. RNA M5U methyltransferase family.

This is an uncharacterized protein from Protochlamydia amoebophila (strain UWE25).